The sequence spans 72 residues: Prophage late control protein OgrK (72 aa).

In terms of biological role, cryptic version of the phage P2 OGR protein which acts as an activator of P2 late transcription. This is Prophage late control protein OgrK (ogrK) from Escherichia coli (strain K12).